A 319-amino-acid polypeptide reads, in one-letter code: Epoxyqueuosine reductase (319 aa).

Aspartate 146 serves as the catalytic Proton donor. Residues 188–220 (ASLPADQPARSLCGHCQRCLPACPTAAITEPFV) form the 4Fe-4S ferredoxin-type domain. [4Fe-4S] cluster-binding residues include cysteine 200, cysteine 203, cysteine 206, cysteine 210, cysteine 226, cysteine 250, cysteine 253, and cysteine 257.

It belongs to the QueG family. As to quaternary structure, monomer. Cob(II)alamin is required as a cofactor. The cofactor is [4Fe-4S] cluster.

Its subcellular location is the cytoplasm. It catalyses the reaction epoxyqueuosine(34) in tRNA + AH2 = queuosine(34) in tRNA + A + H2O. The protein operates within tRNA modification; tRNA-queuosine biosynthesis. In terms of biological role, catalyzes the conversion of epoxyqueuosine (oQ) to queuosine (Q), which is a hypermodified base found in the wobble positions of tRNA(Asp), tRNA(Asn), tRNA(His) and tRNA(Tyr). The sequence is that of Epoxyqueuosine reductase from Synechococcus sp. (strain RCC307).